The chain runs to 263 residues: Complement C1q tumor necrosis factor-related protein 6 (263 aa).

Residues Met1–Gly24 form the signal peptide. Asn76 carries N-linked (GlcNAc...) asparagine glycosylation. The tract at residues Leu80–Ser123 is disordered. In terms of domain architecture, Collagen-like spans Gly82–Ser123. The C1q domain occupies Cys124–Asn263.

Its subcellular location is the secreted. This Rattus norvegicus (Rat) protein is Complement C1q tumor necrosis factor-related protein 6 (C1qtnf6).